Reading from the N-terminus, the 302-residue chain is Nucleotide-binding protein Bcep18194_A6125 (302 aa).

8 to 15 contacts ATP; it reads GISGSGKS. 57–60 provides a ligand contact to GTP; sequence DARS.

The protein belongs to the RapZ-like family.

Functionally, displays ATPase and GTPase activities. This chain is Nucleotide-binding protein Bcep18194_A6125, found in Burkholderia lata (strain ATCC 17760 / DSM 23089 / LMG 22485 / NCIMB 9086 / R18194 / 383).